Here is a 326-residue protein sequence, read N- to C-terminus: NADH-quinone oxidoreductase subunit H (326 aa).

8 consecutive transmembrane segments (helical) span residues 11–31, 81–101, 114–134, 154–174, 186–206, 237–257, 265–285, and 302–322; these read ILLS…CGAF, VIFT…FAIV, IGIL…LFAG, LSYE…AGSF, LWNV…GVAV, FFVG…TLFF, LPPF…FILI, and WKVC…VILW.

It belongs to the complex I subunit 1 family. In terms of assembly, NDH-1 is composed of 13 different subunits. Subunits NuoA, H, J, K, L, M, N constitute the membrane sector of the complex.

The protein resides in the cell inner membrane. The enzyme catalyses a quinone + NADH + 5 H(+)(in) = a quinol + NAD(+) + 4 H(+)(out). In terms of biological role, NDH-1 shuttles electrons from NADH, via FMN and iron-sulfur (Fe-S) centers, to quinones in the respiratory chain. The immediate electron acceptor for the enzyme in this species is believed to be ubiquinone. Couples the redox reaction to proton translocation (for every two electrons transferred, four hydrogen ions are translocated across the cytoplasmic membrane), and thus conserves the redox energy in a proton gradient. This subunit may bind ubiquinone. In Cronobacter sakazakii (strain ATCC BAA-894) (Enterobacter sakazakii), this protein is NADH-quinone oxidoreductase subunit H.